Here is a 179-residue protein sequence, read N- to C-terminus: Peptidyl-prolyl cis-trans isomerase A (179 aa).

The region spanning Phe15 to Gln178 is the PPIase cyclophilin-type domain.

It belongs to the cyclophilin-type PPIase family.

The protein localises to the cytoplasm. Its subcellular location is the cytosol. The catalysed reaction is [protein]-peptidylproline (omega=180) = [protein]-peptidylproline (omega=0). Its activity is regulated as follows. Binds cyclosporin A (CsA). CsA mediates some of its effects via an inhibitory action on PPIase. PPIase that catalyzes the cis-trans isomerization of proline imidic peptide bonds in oligopeptides and may therefore assist protein folding. In Dictyostelium discoideum (Social amoeba), this protein is Peptidyl-prolyl cis-trans isomerase A (ppiA).